The chain runs to 475 residues: Ribulose bisphosphate carboxylase large chain (475 aa).

A propeptide spanning residues 1–2 is cleaved from the precursor; it reads MS. N-acetylproline is present on Pro3. Lys14 carries the N6,N6,N6-trimethyllysine modification. Substrate is bound by residues Asn123 and Thr173. Residue Lys175 is the Proton acceptor of the active site. Lys177 contributes to the substrate binding site. Positions 201, 203, and 204 each coordinate Mg(2+). Residue Lys201 is modified to N6-carboxylysine. The active-site Proton acceptor is the His294. The substrate site is built by Arg295, His327, and Ser379.

This sequence belongs to the RuBisCO large chain family. Type I subfamily. Heterohexadecamer of 8 large chains and 8 small chains; disulfide-linked. The disulfide link is formed within the large subunit homodimers. Mg(2+) serves as cofactor. The disulfide bond which can form in the large chain dimeric partners within the hexadecamer appears to be associated with oxidative stress and protein turnover.

The protein resides in the plastid. The protein localises to the chloroplast. The enzyme catalyses 2 (2R)-3-phosphoglycerate + 2 H(+) = D-ribulose 1,5-bisphosphate + CO2 + H2O. The catalysed reaction is D-ribulose 1,5-bisphosphate + O2 = 2-phosphoglycolate + (2R)-3-phosphoglycerate + 2 H(+). Its function is as follows. RuBisCO catalyzes two reactions: the carboxylation of D-ribulose 1,5-bisphosphate, the primary event in carbon dioxide fixation, as well as the oxidative fragmentation of the pentose substrate in the photorespiration process. Both reactions occur simultaneously and in competition at the same active site. This Oenothera argillicola (Appalachian evening primrose) protein is Ribulose bisphosphate carboxylase large chain.